We begin with the raw amino-acid sequence, 811 residues long: G-type lectin S-receptor-like serine/threonine-protein kinase LECRK3 (811 aa).

The signal sequence occupies residues Met1–Ala23. Residues Gln24–Gly153 enclose the Bulb-type lectin domain. Residues Gln24–Ser464 are Extracellular-facing. N-linked (GlcNAc...) asparagine glycans are attached at residues Asn26, Asn39, Asn59, Asn219, Asn226, Asn237, and Asn242. An EGF-like; atypical domain is found at Pro292–Arg344. Disulfide bonds link Cys296–Cys314, Cys308–Cys325, Cys327–Cys343, Cys389–Cys411, and Cys393–Cys399. The N-linked (GlcNAc...) asparagine glycan is linked to Asn321. A PAN domain is found at Cys352–Thr430. Residues Leu465 to Thr485 form a helical membrane-spanning segment. At Tyr486 to Ala811 the chain is on the cytoplasmic side. In terms of domain architecture, Protein kinase spans Gly521–Val795. ATP is bound by residues Leu527–Val535 and Lys551. Residue Asp645 is the Proton acceptor of the active site.

This sequence belongs to the protein kinase superfamily. Ser/Thr protein kinase family.

The protein localises to the membrane. The catalysed reaction is L-seryl-[protein] + ATP = O-phospho-L-seryl-[protein] + ADP + H(+). The enzyme catalyses L-threonyl-[protein] + ATP = O-phospho-L-threonyl-[protein] + ADP + H(+). Functionally, involved in resistance against the herbivorous insect brown planthopper (N.lugens, BPH). Member of the BPH3 (BPH resistance locus 3) cluster which contains LECRK1, LECRK2 and LECRK3. In Oryza sativa subsp. indica (Rice), this protein is G-type lectin S-receptor-like serine/threonine-protein kinase LECRK3.